The following is a 157-amino-acid chain: SsrA-binding protein (157 aa).

Belongs to the SmpB family.

The protein localises to the cytoplasm. Its function is as follows. Required for rescue of stalled ribosomes mediated by trans-translation. Binds to transfer-messenger RNA (tmRNA), required for stable association of tmRNA with ribosomes. tmRNA and SmpB together mimic tRNA shape, replacing the anticodon stem-loop with SmpB. tmRNA is encoded by the ssrA gene; the 2 termini fold to resemble tRNA(Ala) and it encodes a 'tag peptide', a short internal open reading frame. During trans-translation Ala-aminoacylated tmRNA acts like a tRNA, entering the A-site of stalled ribosomes, displacing the stalled mRNA. The ribosome then switches to translate the ORF on the tmRNA; the nascent peptide is terminated with the 'tag peptide' encoded by the tmRNA and targeted for degradation. The ribosome is freed to recommence translation, which seems to be the essential function of trans-translation. The sequence is that of SsrA-binding protein from Christiangramia forsetii (strain DSM 17595 / CGMCC 1.15422 / KT0803) (Gramella forsetii).